A 363-amino-acid polypeptide reads, in one-letter code: MNTPYSIEHLLNPALRNIATYKVEGGQQAEIKLNQNESPFDVPQWLKEEIIGEFIREPWNRYPDILPYRAMEAYANFVGVPAECVIMSNGSNEMLYTIFLACLGPGRKVLIPNPSFSLYEKLALLLQSDIVEVPMKSDLSFDVEAIMKAAHNEAVDVIVLSNPNNPTSTSMSYDAVRKIAESTQALVLVDEAYIEFSRERSMVDTIEELPNVVVLRTMSKALALAGIRIGFALANAPLMAEISKPKIPFASSRLAEITLMKVLANYRLVDEAVSAILSERDALYEQLRMMEGVSPFASDTNFLIVRVADANATFKRLYDKGILVRNVSGYHLMEGCLRCNVGLPEENRRLAEAFAELSVEVKG.

Lysine 220 bears the N6-(pyridoxal phosphate)lysine mark.

It belongs to the class-II pyridoxal-phosphate-dependent aminotransferase family. Histidinol-phosphate aminotransferase subfamily. Homodimer. Pyridoxal 5'-phosphate serves as cofactor.

The catalysed reaction is L-histidinol phosphate + 2-oxoglutarate = 3-(imidazol-4-yl)-2-oxopropyl phosphate + L-glutamate. It participates in amino-acid biosynthesis; L-histidine biosynthesis; L-histidine from 5-phospho-alpha-D-ribose 1-diphosphate: step 7/9. In Chlorobium chlorochromatii (strain CaD3), this protein is Histidinol-phosphate aminotransferase.